We begin with the raw amino-acid sequence, 431 residues long: Probable zinc metalloprotease Lema_P086240 (431 aa).

Asn-46 carries an N-linked (GlcNAc...) asparagine glycan. Zn(2+)-binding residues include His-117, Asp-137, and Glu-170. The N-linked (GlcNAc...) asparagine glycan is linked to Asn-185. Asp-197 serves as a coordination point for Zn(2+). N-linked (GlcNAc...) asparagine glycosylation is found at Asn-258, Asn-310, Asn-349, Asn-359, and Asn-369. The Fibronectin type-III domain maps to 344–431 (PGMPRNVTID…KSPAVYPFPG (88 aa)).

This sequence belongs to the peptidase M28 family. M28B subfamily. Requires Zn(2+) as cofactor.

It is found in the secreted. In Leptosphaeria maculans (strain JN3 / isolate v23.1.3 / race Av1-4-5-6-7-8) (Blackleg fungus), this protein is Probable zinc metalloprotease Lema_P086240.